A 323-amino-acid chain; its full sequence is Aquaporin-2 (323 aa).

3 helical membrane-spanning segments follow: residues 32–54 (FLAVFVLMVFTEGCSASAIFTHR), 74–96 (YVAGGVTGAFLNPAIAVAFSVLG), and 103–123 (CFCYMIAQYLGAFLASLAIYA). The NPA 1 motif lies at 85 to 87 (NPA). N-linked (GlcNAc...) asparagine glycosylation is present at asparagine 143. Helical transmembrane passes span 161 to 181 (GAFVDQVFGTALLIIVVLSMV) and 193 to 213 (FPIAIGLLIVVLDISLAYNAG). The NPA 2 motif lies at 217–219 (NPS). Residues 243 to 263 (YTWFFVPVVGSHAGAIVGAVI) traverse the membrane as a helical segment. An N-linked (GlcNAc...) asparagine glycan is attached at asparagine 292.

This sequence belongs to the MIP/aquaporin (TC 1.A.8) family.

It is found in the cell membrane. The catalysed reaction is H2O(in) = H2O(out). It carries out the reaction glycerol(in) = glycerol(out). Functionally, aquaglyceroporin that may modulate the water content and osmolytes during anhydrobiosis. The protein is Aquaporin-2 of Milnesium tardigradum (Water bear).